Reading from the N-terminus, the 425-residue chain is Xylose isomerase (425 aa).

Catalysis depends on residues His101 and Asp104. Mg(2+) contacts are provided by Glu232, Glu268, His271, Asp296, Asp307, Asp309, and Asp339.

Belongs to the xylose isomerase family. As to quaternary structure, homotetramer. It depends on Mg(2+) as a cofactor.

It localises to the cytoplasm. The catalysed reaction is alpha-D-xylose = alpha-D-xylulofuranose. This chain is Xylose isomerase, found in Salmonella paratyphi A (strain ATCC 9150 / SARB42).